The following is a 1368-amino-acid chain: Cingulin (1368 aa).

Residues 9–378 (MADQHIPVGQ…KQQRTVQSEF (370 aa)) form an interaction with TJP3/ZO3 and myosin region. Residues 9–435 (MADQHIPVGQ…EKLPSLQVQP (427 aa)) form a head region. A ZIM motif is present at residues 41-55 (QDSYGVAVRVQGIDG). 5 disordered regions span residues 71-264 (FGVQ…TKPL), 278-312 (GQVR…DTAD), 1053-1080 (SRKE…NSSR), 1163-1183 (NRSR…RSRG), and 1308-1368 (QQEI…TSSC). Positions 83-97 (NASNTSPPNYQNYSS) are enriched in polar residues. The interval 101–294 (GPSRSISSES…ARRSQALKDE (194 aa)) is interaction with F-actin. Low complexity-rich tracts occupy residues 116 to 132 (PYGS…YSSA) and 200 to 211 (SQSSRDSAWSRS). Residues 150-295 (SSLPRPLQAS…RRSQALKDER (146 aa)) are interaction with TJP2/ZO2. Polar residues predominate over residues 228 to 256 (SATSQQSTSVSNKTKKNGLSTSSPSNQSN). Residues 290 to 312 (ALKDERKRSQSLDGRKNYHDTAD) are compositionally biased toward basic and acidic residues. The interval 377 to 1368 (EFQLKSTPDL…TESNLQTSSC (992 aa)) is interaction with myosin. Residues 436–1330 (GEDTISLGSQ…VMEKESKRKP (895 aa)) adopt a coiled-coil conformation. Residues 1320–1338 (KVMEKESKRKPIRPAHDDD) show a composition bias toward basic and acidic residues. A tail region spans residues 1331-1368 (IRPAHDDDLSSDGEFGGPYDPSSITSLLTESNLQTSSC). The segment covering 1352-1368 (SSITSLLTESNLQTSSC) has biased composition (polar residues).

Belongs to the cingulin family. As to quaternary structure, parallel homodimer. Interacts with TJP1/ZO1 and TJP2/ZO2 in vivo, and TJP3/ZO3, myosin and OCLN in vitro, possibly directly. Acts as an F-actin bundling protein in vitro. Localized on the cytoplasmic face of tight junctions of polarized epithelia and some endothelia.

The protein resides in the cell junction. Its subcellular location is the tight junction. Its function is as follows. Probably plays a role in the formation and regulation of the tight junction (TJ) paracellular permeability barrier, possibly by linking ZO proteins to the actomyosin cytoskeleton. This is Cingulin from Xenopus laevis (African clawed frog).